The following is a 237-amino-acid chain: LexA repressor (237 aa).

Positions 26 to 46 form a DNA-binding region, H-T-H motif; the sequence is FDEMKDALDLRSKSGIHRLIT. Active-site for autocatalytic cleavage activity residues include serine 158 and lysine 196.

Belongs to the peptidase S24 family. In terms of assembly, homodimer.

It catalyses the reaction Hydrolysis of Ala-|-Gly bond in repressor LexA.. Represses a number of genes involved in the response to DNA damage (SOS response), including recA and lexA. In the presence of single-stranded DNA, RecA interacts with LexA causing an autocatalytic cleavage which disrupts the DNA-binding part of LexA, leading to derepression of the SOS regulon and eventually DNA repair. This chain is LexA repressor, found in Rhodopseudomonas palustris (strain BisB18).